Reading from the N-terminus, the 188-residue chain is Ribosome-recycling factor (188 aa).

It belongs to the RRF family.

It is found in the cytoplasm. Responsible for the release of ribosomes from messenger RNA at the termination of protein biosynthesis. May increase the efficiency of translation by recycling ribosomes from one round of translation to another. The chain is Ribosome-recycling factor from Blochmanniella floridana.